The sequence spans 276 residues: Large ribosomal subunit protein uL2 (276 aa).

A disordered region spans residues 224 to 265; that stretch reads VMNPVDHPHGGGEGRTASGRHPVSPWGLPTKGYKTRNNKRTD.

Belongs to the universal ribosomal protein uL2 family. As to quaternary structure, part of the 50S ribosomal subunit. Forms a bridge to the 30S subunit in the 70S ribosome.

Its function is as follows. One of the primary rRNA binding proteins. Required for association of the 30S and 50S subunits to form the 70S ribosome, for tRNA binding and peptide bond formation. It has been suggested to have peptidyltransferase activity; this is somewhat controversial. Makes several contacts with the 16S rRNA in the 70S ribosome. This chain is Large ribosomal subunit protein uL2, found in Dichelobacter nodosus (strain VCS1703A).